The sequence spans 504 residues: Diacylglycerol O-acyltransferase 1B (504 aa).

The interval 1-72 (MAISDEPESV…VNSQQQNEKQ (72 aa)) is disordered. A compositionally biased stretch (polar residues) spans 24–41 (SATSTAGLFNSPETTTDS). The segment covering 53–65 (DDSINSDDAAVNS) has biased composition (low complexity). A run of 7 helical transmembrane segments spans residues 108-128 (HAGL…RLII), 152-172 (WPLF…FIVE), 184-204 (VVVV…VLVI), 209-229 (SAFV…LKLV), 259-279 (YPYN…TLCY), 301-321 (LIIF…PIVQ), and 348-368 (VWLC…AELL). Positions 375–381 (FYKDWWN) match the FYXDWWN motif motif. A run of 3 helical transmembrane segments spans residues 416 to 436 (AAAL…CIAV), 438 to 458 (CHIF…LVLI), and 471 to 491 (VGNM…CVLL). Histidine 430 is a catalytic residue.

The protein belongs to the membrane-bound acyltransferase family. Sterol o-acyltransferase subfamily. Highly expressed in flowers and pods. Expressed at low levels in roots, stems and leaves.

Its subcellular location is the endoplasmic reticulum membrane. The enzyme catalyses an acyl-CoA + a 1,2-diacyl-sn-glycerol = a triacyl-sn-glycerol + CoA. Its pathway is glycerolipid metabolism; triacylglycerol biosynthesis. In terms of biological role, major contributors to triacylglycerol (TAG) synthesis and oil accumulation in developing seeds. Catalyzes the acylation of the sn-3 hydroxy group of sn-1,2-diacylglycerol using acyl-CoA. Has a marked preference for oleoyl-CoA and sn-1,2-dioleoylglycerol over vernoloyl-CoA and sn-1,2-divernoloylglycerol. This Glycine max (Soybean) protein is Diacylglycerol O-acyltransferase 1B.